We begin with the raw amino-acid sequence, 75 residues long: Venom serine protease inhibitor BiVSPI (75 aa).

The N-terminal stretch at 1–20 (MSRILFVFLAVMAIFSTSFG) is a signal peptide. Cystine bridges form between cysteine 23–cysteine 55, cysteine 32–cysteine 51, cysteine 35–cysteine 47, cysteine 39–cysteine 75, and cysteine 57–cysteine 69. One can recognise a TIL domain in the interval 23-75 (CGLNEEFKSCGSCEPTCAKPRVTICTMECKIGCQCKSGYLRNGEGTCVLPEKC).

The protein belongs to the serine protease inhibitor-like (TIL domain-containing) family. Post-translationally, may be O-glycosylated. In terms of tissue distribution, expressed by the venom gland (at protein level) and expressed in fat body.

Its subcellular location is the secreted. It is found in the target cell membrane. Antimicrobial venom serine protease inhibitor. Exhibits inhibitory activity against chymotrypsin (IC(50)=19.56 nM, Ki=15.24 nM) and microbial serine proteases, such as subtilisin A (IC(50)=6.57 nM, Ki=6.83 nM) and proteinase K (IC(50)=7.11 nM, Ki=7.02 nM). Has not activity against trypsin, plasmin, tPA, thrombin, factor Xa or elastase. Binds and inhibits Gram-positive bacteria (B.subtilis (MIC=29.45 uM), B.thuringiensis (MIC=91.03 uM)) and the entomopathogenic fungus B.bassiana (MIC=30.09 uM) but not to E.coli. This Bombus ignitus (Bumblebee) protein is Venom serine protease inhibitor BiVSPI.